Consider the following 697-residue polypeptide: Protein arginine N-methyltransferase 7 (697 aa).

SAM-dependent MTase PRMT-type domains follow at residues 14 to 357 (QNTW…YSLW) and 366 to 697 (EQPA…EETK).

This sequence belongs to the class I-like SAM-binding methyltransferase superfamily. Protein arginine N-methyltransferase family. PRMT7 subfamily.

In terms of biological role, essential arginine methyltransferase that can both catalyze the formation of omega-N monomethylarginine (MMA) and symmetrical dimethylarginine (sDMA). Specifically mediates the symmetrical dimethylation of arginine residues in the small nuclear ribonucleoproteins SmD1 and SmD3. In Drosophila virilis (Fruit fly), this protein is Protein arginine N-methyltransferase 7 (Art7).